The sequence spans 617 residues: Erythritol-mannosyl-transferase 1 (617 aa).

2 disordered regions span residues 365 to 396 (RNPG…IDSR) and 567 to 617 (RQRK…VTNP). Residues 371–381 (GFTSPLNSPTA) are compositionally biased toward polar residues. Residues 386 to 396 (KWDEKRPIDSR) are compositionally biased toward basic and acidic residues. Polar residues predominate over residues 578–603 (TAKTSLSVDTTEVATPTFTDTETSLS).

The protein belongs to the UDP-glycosyltransferase family.

The protein operates within secondary metabolite biosynthesis. Functionally, glycosyltransferase; part of the gene cluster that mediates the biosynthesis of mannosylerythritol lipids (MELs), surface-active substances that enhance the availability of water-insoluble substrates. Depending on the number of acetyl groups, mannosylerythritol lipids can be differentiated into MEL A (fully acetylated), MEL B and MEL C (monoacetylated at R-6 and R-4, respectively), and the fully deacetylated MEL D. The first step in the pathway is the generation of mannosylerythritol by the glycosyltransferase EMT1 which catalyzes the transfer of GDP-mannose to the C-4 atom of meso-erythritol. This reaction has to be stereospecific, since only mannosyl-D-erythritol is generated. The produced disaccharide is subsequently acylated with fatty acids of various lengths by the acyltransferases MAC1 and MAC2 at positions C-2 and C-3, repectively. The existence of MEL derivatives which carry an acetyl group at C-2 implies that at least MAC1 also accepts acetyl-CoA as a donor. The final step of MEL biosynthesis is the acetylation of the fully acylated mannosylerythritol lipids catalyzed by the acetyl-CoA-dependent acetyltransferase MAT1. MAT1 displays a relaxed regioselectivity and is able to transfer acetylgroups to both positions C-4 and C-6 of the mannosyl moiety. The sequence is that of Erythritol-mannosyl-transferase 1 from Pseudozyma antarctica (strain T-34) (Yeast).